The sequence spans 340 residues: tRNA N6-adenosine threonylcarbamoyltransferase (340 aa).

Residues H111 and H115 each coordinate Fe cation. Residues 134-138 (LVSGG), D167, G180, and N276 contribute to the substrate site. D304 is a binding site for Fe cation.

This sequence belongs to the KAE1 / TsaD family. Fe(2+) serves as cofactor.

Its subcellular location is the cytoplasm. The enzyme catalyses L-threonylcarbamoyladenylate + adenosine(37) in tRNA = N(6)-L-threonylcarbamoyladenosine(37) in tRNA + AMP + H(+). Its function is as follows. Required for the formation of a threonylcarbamoyl group on adenosine at position 37 (t(6)A37) in tRNAs that read codons beginning with adenine. Is involved in the transfer of the threonylcarbamoyl moiety of threonylcarbamoyl-AMP (TC-AMP) to the N6 group of A37, together with TsaE and TsaB. TsaD likely plays a direct catalytic role in this reaction. This Helicobacter pylori (strain G27) protein is tRNA N6-adenosine threonylcarbamoyltransferase.